Reading from the N-terminus, the 171-residue chain is 16S rRNA aminocarboxypropyltransferase (171 aa).

4 residues coordinate S-adenosyl-L-methionine: Thr18, Leu68, Leu91, and Ser110.

The protein belongs to the TDD superfamily. TSR3 family.

The protein resides in the cytoplasm. The catalysed reaction is an N(1)-methylpseudouridine in rRNA + S-adenosyl-L-methionine = N(1)-methyl-N(3)-[(3S)-3-amino-3-carboxypropyl]pseudouridine in rRNA + S-methyl-5'-thioadenosine + H(+). In terms of biological role, aminocarboxypropyltransferase that catalyzes the aminocarboxypropyl transfer on pseudouridine corresponding to position 914 in M.jannaschii 16S rRNA. It constitutes the last step in biosynthesis of the hypermodified N1-methyl-N3-(3-amino-3-carboxypropyl) pseudouridine (m1acp3-Psi). The polypeptide is 16S rRNA aminocarboxypropyltransferase (Methanosphaera stadtmanae (strain ATCC 43021 / DSM 3091 / JCM 11832 / MCB-3)).